The primary structure comprises 296 residues: Phosphoribosylaminoimidazole-succinocarboxamide synthase (296 aa).

This sequence belongs to the SAICAR synthetase family.

The enzyme catalyses 5-amino-1-(5-phospho-D-ribosyl)imidazole-4-carboxylate + L-aspartate + ATP = (2S)-2-[5-amino-1-(5-phospho-beta-D-ribosyl)imidazole-4-carboxamido]succinate + ADP + phosphate + 2 H(+). The protein operates within purine metabolism; IMP biosynthesis via de novo pathway; 5-amino-1-(5-phospho-D-ribosyl)imidazole-4-carboxamide from 5-amino-1-(5-phospho-D-ribosyl)imidazole-4-carboxylate: step 1/2. This Lachnospira eligens (strain ATCC 27750 / DSM 3376 / VPI C15-48 / C15-B4) (Eubacterium eligens) protein is Phosphoribosylaminoimidazole-succinocarboxamide synthase.